Consider the following 360-residue polypeptide: BOLA class I histocompatibility antigen, alpha chain BL3-6 (360 aa).

Positions 1 to 21 (MGPRALLLLLSGVLILTETRA) are cleaved as a signal peptide. Residues 22 to 111 (GSHSLRYFST…LRGYYNQSEA (90 aa)) are alpha-1. Over 22 to 308 (GSHSLRYFST…QPSFLTMGII (287 aa)) the chain is Extracellular. The N-linked (GlcNAc...) asparagine glycan is linked to N107. The tract at residues 112–203 (GSHTLQWMSG…ENGKDTLLRA (92 aa)) is alpha-2. 2 disulfide bridges follow: C122–C185 and C224–C280. The tract at residues 204-295 (DPPKAHVTHH…GLQEPLTLRW (92 aa)) is alpha-3. An Ig-like C1-type domain is found at 206–292 (PKAHVTHHPI…QHEGLQEPLT (87 aa)). The connecting peptide stretch occupies residues 296 to 308 (EPPQPSFLTMGII). A helical transmembrane segment spans residues 309 to 328 (VGLVLLVVTGAVVAGVVICM). Residues 329-360 (KKRSGEKGGNYIQASSSDSAQGSDVSLTVPKV) are Cytoplasmic-facing. The interval 340–360 (IQASSSDSAQGSDVSLTVPKV) is disordered. The segment covering 341–354 (QASSSDSAQGSDVS) has biased composition (low complexity). Phosphoserine is present on residues S351 and S354.

Belongs to the MHC class I family. As to quaternary structure, heterodimer of an alpha chain and a beta chain (beta-2-microglobulin).

The protein localises to the membrane. Involved in the presentation of foreign antigens to the immune system. This Bos taurus (Bovine) protein is BOLA class I histocompatibility antigen, alpha chain BL3-6.